The primary structure comprises 600 residues: DDB1- and CUL4-associated factor 8-like protein 1 (600 aa).

A disordered region spans residues Met-1–Arg-122. 2 stretches are compositionally biased toward acidic residues: residues Ser-74–Ser-83 and Glu-96–Glu-115. WD repeat units follow at residues Ser-194–Asn-233, Gly-237–Asn-278, Lys-284–Lys-324, Asp-332–Asn-372, Asp-388–Tyr-427, Arg-435–Phe-475, and Asp-479–Leu-518. The tract at residues Pro-562 to Ser-600 is disordered.

This sequence belongs to the WD repeat DCAF8 family.

This Homo sapiens (Human) protein is DDB1- and CUL4-associated factor 8-like protein 1 (DCAF8L1).